A 197-amino-acid polypeptide reads, in one-letter code: Small ribosomal subunit protein uS4c (197 aa).

In terms of domain architecture, S4 RNA-binding spans 85 to 161 (MRLDNILFRL…TGKELANHLN (77 aa)).

The protein belongs to the universal ribosomal protein uS4 family. Part of the 30S ribosomal subunit. Contacts protein S5. The interaction surface between S4 and S5 is involved in control of translational fidelity.

The protein resides in the plastid. One of the primary rRNA binding proteins, it binds directly to 16S rRNA where it nucleates assembly of the body of the 30S subunit. Its function is as follows. With S5 and S12 plays an important role in translational accuracy. The chain is Small ribosomal subunit protein uS4c (rps4) from Cuscuta obtusiflora (Peruvian dodder).